A 295-amino-acid polypeptide reads, in one-letter code: Bifunctional protein FolD 1 (295 aa).

NADP(+) contacts are provided by residues 165–167 (GKS), Ile-190, and Ile-231.

This sequence belongs to the tetrahydrofolate dehydrogenase/cyclohydrolase family. Homodimer.

It carries out the reaction (6R)-5,10-methylene-5,6,7,8-tetrahydrofolate + NADP(+) = (6R)-5,10-methenyltetrahydrofolate + NADPH. It catalyses the reaction (6R)-5,10-methenyltetrahydrofolate + H2O = (6R)-10-formyltetrahydrofolate + H(+). The protein operates within one-carbon metabolism; tetrahydrofolate interconversion. Catalyzes the oxidation of 5,10-methylenetetrahydrofolate to 5,10-methenyltetrahydrofolate and then the hydrolysis of 5,10-methenyltetrahydrofolate to 10-formyltetrahydrofolate. The chain is Bifunctional protein FolD 1 from Rhizorhabdus wittichii (strain DSM 6014 / CCUG 31198 / JCM 15750 / NBRC 105917 / EY 4224 / RW1) (Sphingomonas wittichii).